Reading from the N-terminus, the 705-residue chain is Polyribonucleotide nucleotidyltransferase (705 aa).

Positions 486 and 492 each coordinate Mg(2+). The KH domain occupies 553-612; it reads PRIIKFKINPEKIRDVIGKGGAVIRALTEETGTTIDISDDGSVTIASISNEGGEQAKRRI. Positions 622-690 constitute an S1 motif domain; that stretch reads GKIYEGTVLK…DKGRLRLSMK (69 aa).

The protein belongs to the polyribonucleotide nucleotidyltransferase family. Mg(2+) serves as cofactor.

The protein localises to the cytoplasm. It carries out the reaction RNA(n+1) + phosphate = RNA(n) + a ribonucleoside 5'-diphosphate. Its function is as follows. Involved in mRNA degradation. Catalyzes the phosphorolysis of single-stranded polyribonucleotides processively in the 3'- to 5'-direction. In Nitrosomonas eutropha (strain DSM 101675 / C91 / Nm57), this protein is Polyribonucleotide nucleotidyltransferase.